A 189-amino-acid polypeptide reads, in one-letter code: Peptidyl-tRNA hydrolase (189 aa).

Tyr15 is a binding site for tRNA. His20 (proton acceptor) is an active-site residue. Residues Phe66, Asn68, and Asn114 each contribute to the tRNA site.

This sequence belongs to the PTH family. In terms of assembly, monomer.

Its subcellular location is the cytoplasm. The catalysed reaction is an N-acyl-L-alpha-aminoacyl-tRNA + H2O = an N-acyl-L-amino acid + a tRNA + H(+). Hydrolyzes ribosome-free peptidyl-tRNAs (with 1 or more amino acids incorporated), which drop off the ribosome during protein synthesis, or as a result of ribosome stalling. Functionally, catalyzes the release of premature peptidyl moieties from peptidyl-tRNA molecules trapped in stalled 50S ribosomal subunits, and thus maintains levels of free tRNAs and 50S ribosomes. The polypeptide is Peptidyl-tRNA hydrolase (Streptococcus sanguinis (strain SK36)).